Consider the following 574-residue polypeptide: Ankyrin repeat protein B18 (574 aa).

6 ANK repeats span residues 56–87 (TGYT…DVTM), 135–164 (IKSR…DPNF), 167–213 (DGYT…NLNA), 217–249 (CGNT…NFKI), 253–285 (HGLT…NVGE), and 327–356 (EGKT…DINA). Positions 541 to 574 (NCLLTLLPSEIIYEILYMLTINDLYNISYPPTKV) constitute an F-box domain.

The protein is Ankyrin repeat protein B18 of Vaccinia virus (strain Ankara) (VACV).